Here is a 377-residue protein sequence, read N- to C-terminus: Bifunctional enzyme IspD/IspF (377 aa).

A 2-C-methyl-D-erythritol 4-phosphate cytidylyltransferase region spans residues 1-221 (MTTAAIIVAA…ERILRQDMDV (221 aa)). The interval 222–377 (RLGNGYDVHR…ALATACLVKP (156 aa)) is 2-C-methyl-D-erythritol 2,4-cyclodiphosphate synthase. Positions 228 and 230 each coordinate a divalent metal cation. 4-CDP-2-C-methyl-D-erythritol 2-phosphate-binding positions include 228 to 230 (DVH) and 254 to 255 (HS). Residue His262 participates in a divalent metal cation binding. 4-CDP-2-C-methyl-D-erythritol 2-phosphate is bound by residues 276–278 (DIG), 352–355 (TTSE), Phe359, and Arg362.

This sequence in the N-terminal section; belongs to the IspD/TarI cytidylyltransferase family. IspD subfamily. In the C-terminal section; belongs to the IspF family. A divalent metal cation is required as a cofactor.

The enzyme catalyses 2-C-methyl-D-erythritol 4-phosphate + CTP + H(+) = 4-CDP-2-C-methyl-D-erythritol + diphosphate. It carries out the reaction 4-CDP-2-C-methyl-D-erythritol 2-phosphate = 2-C-methyl-D-erythritol 2,4-cyclic diphosphate + CMP. It participates in isoprenoid biosynthesis; isopentenyl diphosphate biosynthesis via DXP pathway; isopentenyl diphosphate from 1-deoxy-D-xylulose 5-phosphate: step 2/6. It functions in the pathway isoprenoid biosynthesis; isopentenyl diphosphate biosynthesis via DXP pathway; isopentenyl diphosphate from 1-deoxy-D-xylulose 5-phosphate: step 4/6. In terms of biological role, bifunctional enzyme that catalyzes the formation of 4-diphosphocytidyl-2-C-methyl-D-erythritol from CTP and 2-C-methyl-D-erythritol 4-phosphate (MEP) (IspD), and catalyzes the conversion of 4-diphosphocytidyl-2-C-methyl-D-erythritol 2-phosphate (CDP-ME2P) to 2-C-methyl-D-erythritol 2,4-cyclodiphosphate (ME-CPP) with a corresponding release of cytidine 5-monophosphate (CMP) (IspF). The polypeptide is Bifunctional enzyme IspD/IspF (Ruegeria pomeroyi (strain ATCC 700808 / DSM 15171 / DSS-3) (Silicibacter pomeroyi)).